The primary structure comprises 249 residues: Caffeoyl-CoA O-methyltransferase 1 (249 aa).

Residue Lys-23 participates in substrate binding. S-adenosyl-L-methionine-binding positions include Thr-65, Glu-87, 89-90 (GV), Ser-95, Asp-113, and Ala-142. Asp-165 is a binding site for substrate. Asp-165 is an a divalent metal cation binding site. S-adenosyl-L-methionine is bound at residue Asp-167. A divalent metal cation contacts are provided by Asp-191 and Asn-192. Substrate is bound at residue Asn-196.

The protein belongs to the class I-like SAM-binding methyltransferase superfamily. Cation-dependent O-methyltransferase family. CCoAMT subfamily. Requires a divalent metal cation as cofactor. As to expression, mostly expressed in petal limbs and tubes, and, at low levels, in flower buds, stamens, pistils, stems, roots and leaves.

Its subcellular location is the cytoplasm. It is found in the cytosol. It catalyses the reaction (E)-caffeoyl-CoA + S-adenosyl-L-methionine = (E)-feruloyl-CoA + S-adenosyl-L-homocysteine + H(+). The catalysed reaction is (E)-5-hydroxyferuloyl-CoA + S-adenosyl-L-methionine = (E)-sinapoyl-CoA + S-adenosyl-L-homocysteine + H(+). The protein operates within aromatic compound metabolism; phenylpropanoid biosynthesis. In terms of biological role, involved in the production of floral volatile phenylpropanoids in flowers of fragrant cultivars (e.g. cv. Mitchell and cv. V26) from cinnamic acid, a common precursor with the anthocyanin biosynthesis pathway involved in flower pigmentation. Methylates caffeoyl-CoA to feruloyl-CoA, also able to methylate 5-hydroxyferuloyl-CoA. The protein is Caffeoyl-CoA O-methyltransferase 1 of Petunia hybrida (Petunia).